The chain runs to 640 residues: Putative solute carrier organic anion transporter family member 1B7 (640 aa).

The Extracellular segment spans residues 1–16 (MKISTTQIERRFEISS). The helical transmembrane segment at 17 to 37 (SLVGLIDGSFEIGNLFVIVFV) threads the bilayer. Topologically, residues 38–49 (SYFGSKLHRPKL) are cytoplasmic. A helical transmembrane segment spans residues 50–70 (IGIGCFLMGTGSILMALPHFF). Over 71 to 123 (MGYYRYSKETNIDPSENSTSNLPNCLINQMLSLNRTPSEIIERGCVKESGSHM) the chain is Extracellular. A helical transmembrane segment spans residues 124 to 144 (WIYVFMGNMLRGIGETPIVPL). The Cytoplasmic segment spans residues 145 to 159 (GISYIDDFAKEGHSS). A helical transmembrane segment spans residues 160 to 180 (LYLGTVNVMGMTGLVFAFMLG). The Extracellular segment spans residues 181–211 (SLFAKMYVDIGYVDLSTIRITPKDSRWVGAW). A helical membrane pass occupies residues 212-232 (WLGFLVSGIVSIISSIPFFFL). The Cytoplasmic segment spans residues 233-292 (PLNPNKPQKERKVSLFLHVLKTNDKRNQIANLTNRRKYITKNVTGFFQSLKSILTNPLYV). Phosphoserine is present on S246. A helical transmembrane segment spans residues 293 to 313 (IFVIFTLLHMSSYIASLTYII). Topologically, residues 314–329 (KMVEQQYGWSASKTNF) are extracellular. Residues 330-350 (LLGVLALPAVAIGMFSGGYII) traverse the membrane as a helical segment. The Cytoplasmic segment spans residues 351 to 362 (KKFKLSLVGLAK). The chain crosses the membrane as a helical span at residues 363–383 (LAFCSATVHLLSQVLYFFLIC). Residues 384 to 492 (ESKSVAGLTL…CTRKSYVYFV (109 aa)) lie on the Extracellular side of the membrane. A Kazal-like domain is found at 406–461 (DVPLSYCNSECNCDESQWEPVCGNNGITYLSPCLAGCKSSSGNKEPIVFYNCSCVE). Disulfide bonds link C412–C442, C418–C438, and C427–C459. The helical transmembrane segment at 493 to 513 (IQVLDAFLCAVGLTSYSVLVI) threads the bilayer. Over 514–521 (RIVQPELK) the chain is Cytoplasmic. Residues 522–542 (ALAIGFHSMIMRSLGGILVPI) form a helical membrane-spanning segment. Residues 543–577 (YFGALIDTTCMKWSTNSCGARGACRIYNSTYLGRA) are Extracellular-facing. A helical membrane pass occupies residues 578–598 (FFGLKVALIFPVLVLLTVFIF). Topologically, residues 599-640 (VVRKKSHGKDTKVLENERQVMDEANLEFLNDSEHFVPSAEEQ) are cytoplasmic. A Phosphoserine modification is found at S636.

Belongs to the organo anion transporter (TC 2.A.60) family.

The protein resides in the cell membrane. This is Putative solute carrier organic anion transporter family member 1B7 (SLCO1B7) from Homo sapiens (Human).